The following is a 363-amino-acid chain: Flagellar P-ring protein (363 aa).

An N-terminal signal peptide occupies residues 1 to 20; that stretch reads MKLKLFLLSVLLLVSGSSQA.

Belongs to the FlgI family. The basal body constitutes a major portion of the flagellar organelle and consists of four rings (L,P,S, and M) mounted on a central rod.

It localises to the periplasm. Its subcellular location is the bacterial flagellum basal body. In terms of biological role, assembles around the rod to form the L-ring and probably protects the motor/basal body from shearing forces during rotation. In Shewanella woodyi (strain ATCC 51908 / MS32), this protein is Flagellar P-ring protein.